The sequence spans 88 residues: Large ribosomal subunit protein bL27 (88 aa).

The segment at 1–25 (MAHKKGASSSRNGRDSNAQRLGVKR) is disordered. The segment covering 7–19 (ASSSRNGRDSNAQ) has biased composition (polar residues).

This sequence belongs to the bacterial ribosomal protein bL27 family.

In Nocardia farcinica (strain IFM 10152), this protein is Large ribosomal subunit protein bL27.